Here is a 306-residue protein sequence, read N- to C-terminus: tRNA dimethylallyltransferase (306 aa).

15–22 (GPTASGKS) is an ATP binding site. 17–22 (TASGKS) serves as a coordination point for substrate. An interaction with substrate tRNA region spans residues 40–43 (DSMQ).

Belongs to the IPP transferase family. Monomer. It depends on Mg(2+) as a cofactor.

The catalysed reaction is adenosine(37) in tRNA + dimethylallyl diphosphate = N(6)-dimethylallyladenosine(37) in tRNA + diphosphate. Its function is as follows. Catalyzes the transfer of a dimethylallyl group onto the adenine at position 37 in tRNAs that read codons beginning with uridine, leading to the formation of N6-(dimethylallyl)adenosine (i(6)A). The protein is tRNA dimethylallyltransferase of Methylobacterium sp. (strain 4-46).